The primary structure comprises 318 residues: Ribonuclease Z (318 aa).

The Zn(2+) site is built by His62, His64, Asp66, His67, His144, Asp215, and His273. Residue Asp66 is the Proton acceptor of the active site.

This sequence belongs to the RNase Z family. Homodimer. Zn(2+) is required as a cofactor.

The enzyme catalyses Endonucleolytic cleavage of RNA, removing extra 3' nucleotides from tRNA precursor, generating 3' termini of tRNAs. A 3'-hydroxy group is left at the tRNA terminus and a 5'-phosphoryl group is left at the trailer molecule.. In terms of biological role, zinc phosphodiesterase, which displays some tRNA 3'-processing endonuclease activity. Probably involved in tRNA maturation, by removing a 3'-trailer from precursor tRNA. This chain is Ribonuclease Z, found in Prochlorococcus marinus (strain MIT 9313).